We begin with the raw amino-acid sequence, 141 residues long: Endoribonuclease YbeY (141 aa).

H101, H105, and H111 together coordinate Zn(2+).

The protein belongs to the endoribonuclease YbeY family. Requires Zn(2+) as cofactor.

The protein localises to the cytoplasm. Functionally, single strand-specific metallo-endoribonuclease involved in late-stage 70S ribosome quality control and in maturation of the 3' terminus of the 16S rRNA. This chain is Endoribonuclease YbeY, found in Nitrosomonas eutropha (strain DSM 101675 / C91 / Nm57).